A 125-amino-acid chain; its full sequence is Prefoldin subunit beta (125 aa).

Belongs to the prefoldin subunit beta family. As to quaternary structure, heterohexamer of two alpha and four beta subunits.

The protein localises to the cytoplasm. Its function is as follows. Molecular chaperone capable of stabilizing a range of proteins. Seems to fulfill an ATP-independent, HSP70-like function in archaeal de novo protein folding. This is Prefoldin subunit beta from Pyrobaculum islandicum (strain DSM 4184 / JCM 9189 / GEO3).